The primary structure comprises 309 residues: tRNA dimethylallyltransferase (309 aa).

An ATP-binding site is contributed by 8-15; sequence GPTATGKS. 10 to 15 is a binding site for substrate; the sequence is TATGKS. Residues 33–36 are interaction with substrate tRNA; sequence DSRQ.

It belongs to the IPP transferase family. As to quaternary structure, monomer. The cofactor is Mg(2+).

The catalysed reaction is adenosine(37) in tRNA + dimethylallyl diphosphate = N(6)-dimethylallyladenosine(37) in tRNA + diphosphate. In terms of biological role, catalyzes the transfer of a dimethylallyl group onto the adenine at position 37 in tRNAs that read codons beginning with uridine, leading to the formation of N6-(dimethylallyl)adenosine (i(6)A). This Trichodesmium erythraeum (strain IMS101) protein is tRNA dimethylallyltransferase.